We begin with the raw amino-acid sequence, 654 residues long: DNA ligase (654 aa).

Residues aspartate 32–aspartate 36 and serine 81–leucine 82 contribute to the NAD(+) site. Lysine 112 functions as the N6-AMP-lysine intermediate in the catalytic mechanism. Residues arginine 133, glutamate 167, and lysine 306 each coordinate NAD(+). Zn(2+)-binding residues include cysteine 400, cysteine 403, cysteine 416, and cysteine 421. The BRCT domain maps to glutamate 577–glutamate 654.

The protein belongs to the NAD-dependent DNA ligase family. LigA subfamily. Mg(2+) is required as a cofactor. It depends on Mn(2+) as a cofactor.

The catalysed reaction is NAD(+) + (deoxyribonucleotide)n-3'-hydroxyl + 5'-phospho-(deoxyribonucleotide)m = (deoxyribonucleotide)n+m + AMP + beta-nicotinamide D-nucleotide.. In terms of biological role, DNA ligase that catalyzes the formation of phosphodiester linkages between 5'-phosphoryl and 3'-hydroxyl groups in double-stranded DNA using NAD as a coenzyme and as the energy source for the reaction. It is essential for DNA replication and repair of damaged DNA. The chain is DNA ligase from Helicobacter acinonychis (strain Sheeba).